The chain runs to 321 residues: Epoxyqueuosine reductase (321 aa).

The active-site Proton donor is D137. The region spanning 179-211 (EPLNADPPARSLCGRCSACIDACPTHAIREPFV) is the 4Fe-4S ferredoxin-type domain. 8 residues coordinate [4Fe-4S] cluster: C191, C194, C197, C201, C217, C245, C248, and C252.

This sequence belongs to the QueG family. As to quaternary structure, monomer. It depends on cob(II)alamin as a cofactor. [4Fe-4S] cluster serves as cofactor.

Its subcellular location is the cytoplasm. It carries out the reaction epoxyqueuosine(34) in tRNA + AH2 = queuosine(34) in tRNA + A + H2O. It functions in the pathway tRNA modification; tRNA-queuosine biosynthesis. Catalyzes the conversion of epoxyqueuosine (oQ) to queuosine (Q), which is a hypermodified base found in the wobble positions of tRNA(Asp), tRNA(Asn), tRNA(His) and tRNA(Tyr). The sequence is that of Epoxyqueuosine reductase from Synechococcus sp. (strain CC9605).